Here is a 271-residue protein sequence, read N- to C-terminus: Urease accessory protein UreD (271 aa).

Belongs to the UreD family. UreD, UreF and UreG form a complex that acts as a GTP-hydrolysis-dependent molecular chaperone, activating the urease apoprotein by helping to assemble the nickel containing metallocenter of UreC. The UreE protein probably delivers the nickel.

The protein localises to the cytoplasm. Required for maturation of urease via the functional incorporation of the urease nickel metallocenter. This is Urease accessory protein UreD from Haemophilus influenzae (strain 86-028NP).